A 422-amino-acid polypeptide reads, in one-letter code: 5-methylthioadenosine/S-adenosylhomocysteine deaminase 1 (422 aa).

The Zn(2+) site is built by His56 and His58. Residues Glu85 and His174 each coordinate substrate. His201 serves as a coordination point for Zn(2+). Positions 204 and 290 each coordinate substrate. Asp290 is a binding site for Zn(2+).

The protein belongs to the metallo-dependent hydrolases superfamily. MTA/SAH deaminase family. It depends on Zn(2+) as a cofactor.

It catalyses the reaction S-adenosyl-L-homocysteine + H2O + H(+) = S-inosyl-L-homocysteine + NH4(+). The catalysed reaction is S-methyl-5'-thioadenosine + H2O + H(+) = S-methyl-5'-thioinosine + NH4(+). Its function is as follows. Catalyzes the deamination of 5-methylthioadenosine and S-adenosyl-L-homocysteine into 5-methylthioinosine and S-inosyl-L-homocysteine, respectively. Is also able to deaminate adenosine. The sequence is that of 5-methylthioadenosine/S-adenosylhomocysteine deaminase 1 from Archaeoglobus fulgidus (strain ATCC 49558 / DSM 4304 / JCM 9628 / NBRC 100126 / VC-16).